We begin with the raw amino-acid sequence, 245 residues long: Protein crossbronx (245 aa).

The region spanning 20–177 is the UBC core domain; it reads QQEYKILAEY…VQESIVESKS (158 aa).

This sequence belongs to the ubiquitin-conjugating enzyme family. FTS subfamily.

This chain is Protein crossbronx (cbx), found in Drosophila virilis (Fruit fly).